Here is a 114-residue protein sequence, read N- to C-terminus: Protein ORF3 (114 aa).

Hydrophobic regions lie at residues 6 to 24 and 33 to 53; these read WALG…CCSR and AVVG…GLIL. An interaction with host HPX region spans residues 28-68; it reads VSRLAAVVGGAAAVPAVVSGVTGLILSPSQSPIFIQPTPSP. An interaction with the capsid protein region spans residues 48–72; that stretch reads VTGLILSPSQSPIFIQPTPSPRMSP. Ser71 is subject to Phosphoserine; by host. Positions 72 to 114 are homodimerization, and interaction with host AMBP/bikunin; sequence PLRPGLDLVFANPSDHSAPLGATRPSAPPLPHVVDLPQLGPRR. The disordered stretch occupies residues 85–114; that stretch reads SDHSAPLGATRPSAPPLPHVVDLPQLGPRR. An interaction with host SRC, HCK, FYN, PIK3R3 and GRB2 region spans residues 95–104; sequence RPSAPPLPHV. The short motif at 96–99 is the PTAP/PSAP motif element; it reads PSAP.

It belongs to the hepevirus ORF3 protein family. Forms homooligomers. Interacts with host SRC, HCK, FYN, PIK3R3 and GRB2 (via SH3 domain); binding does not activate the kinases. Interacts with host AMBP/bikunin and AMBP/alpha-1-microglobulin peptides. Interacts with host HPX/hemopexin. Interacts (when phosphorylated) with capsid protein ORF2. Interacts with host TSG101; this interaction plays a role in viral release from the host cell. Interacts with host SIRPA; this interaction down-regulates the phosphorylation of host IRF3. Post-translationally, palmitoylated in the N-terminus.

It is found in the host endoplasmic reticulum membrane. It localises to the host cytoplasm. The protein resides in the host cytoskeleton. The protein localises to the virion. Its subcellular location is the host cell membrane. Its function is as follows. Small multifunctional phosphoprotein involved in virion morphogenesis, egress and counteracting host innate immunity. Plays critical roles in the final steps of viral release by interacting with host TSG101, a member of the vacuolar protein-sorting pathway and using other cellular host proteins involved in vesicle formation pathway. Also acts as a viroporin and forms ion conductive pores allowing viral particle release. Impairs the generation of type I interferon by down-regulating host TLR3 and TLR7 as well as their downstream signaling pathways. Down-regulates the phosphorylation of host IRF3 via the interaction with host SIRP-alpha, thereby inhibiting IFN-I expression. Interacts with host microtubules. The chain is Protein ORF3 from Hepatitis E virus genotype 1 (isolate Human/India/Hyderabad) (HEV-1).